A 515-amino-acid polypeptide reads, in one-letter code: Fatty acyl-CoA reductase 1 (515 aa).

Over 1–465 (MVSIPEYYEG…ARKHLNKLRN (465 aa)) the chain is Cytoplasmic. The segment at 451-507 (SGLPAARKHLNKLRNIRYGFNTILVILIWRIFIARSQMARNIWYFVVSLCYKFLSYF) is necessary and sufficient for PEX19-mediated localization into peroxisome membrane. The chain crosses the membrane as a helical span at residues 466–483 (IRYGFNTILVILIWRIFI). Residues 484 to 515 (ARSQMARNIWYFVVSLCYKFLSYFRASSTMRY) lie on the Peroxisomal side of the membrane.

It belongs to the fatty acyl-CoA reductase family. As to quaternary structure, interacts with PEX19; PEX19 mediates the targeting of FAR1 to peroxisomes.

The protein localises to the peroxisome membrane. It carries out the reaction a long-chain fatty acyl-CoA + 2 NADPH + 2 H(+) = a long-chain primary fatty alcohol + 2 NADP(+) + CoA. It catalyses the reaction hexadecanoyl-CoA + 2 NADPH + 2 H(+) = hexadecan-1-ol + 2 NADP(+) + CoA. The enzyme catalyses octadecanoyl-CoA + 2 NADPH + 2 H(+) = octadecan-1-ol + 2 NADP(+) + CoA. The catalysed reaction is (9Z)-octadecenoyl-CoA + 2 NADPH + 2 H(+) = (9Z)-octadecen-1-ol + 2 NADP(+) + CoA. It carries out the reaction (9Z,12Z)-octadecadienoyl-CoA + 2 NADPH + 2 H(+) = (9Z,12Z)-octadecadien-1-ol + 2 NADP(+) + CoA. It catalyses the reaction eicosanoyl-CoA + 2 NADPH + 2 H(+) = eicosan-1-ol + 2 NADP(+) + CoA. The enzyme catalyses 16-methylheptadecanoyl-CoA + 2 NADPH + 2 H(+) = 16-methylheptadecan-1-ol + 2 NADP(+) + CoA. The catalysed reaction is 18-methylnonadecanoyl-CoA + 2 NADPH + 2 H(+) = 18-methylnonadecan-1-ol + 2 NADP(+) + CoA. In terms of biological role, catalyzes the reduction of saturated and unsaturated C16 or C18 fatty acyl-CoA to fatty alcohols. It plays an essential role in the production of ether lipids/plasmalogens which synthesis requires fatty alcohols. In parallel, it is also required for wax monoesters production since fatty alcohols also constitute a substrate for their synthesis. This Pongo abelii (Sumatran orangutan) protein is Fatty acyl-CoA reductase 1.